The chain runs to 513 residues: Probable DNA ligase (513 aa).

ATP is bound at residue E215. Catalysis depends on K217, which acts as the N6-AMP-lysine intermediate. Residues R222, R237, E266, F306, R378, and K384 each coordinate ATP.

It belongs to the ATP-dependent DNA ligase family. The cofactor is Mg(2+).

The enzyme catalyses ATP + (deoxyribonucleotide)n-3'-hydroxyl + 5'-phospho-(deoxyribonucleotide)m = (deoxyribonucleotide)n+m + AMP + diphosphate.. Functionally, DNA ligase that seals nicks in double-stranded DNA during DNA replication, DNA recombination and DNA repair. The protein is Probable DNA ligase of Mycobacterium marinum (strain ATCC BAA-535 / M).